The sequence spans 185 residues: Small ribosomal subunit protein uS7 (185 aa).

The protein belongs to the universal ribosomal protein uS7 family. As to quaternary structure, part of the 30S ribosomal subunit.

Its function is as follows. One of the primary rRNA binding proteins, it binds directly to 16S rRNA where it nucleates assembly of the head domain of the 30S subunit. Is located at the subunit interface close to the decoding center. This chain is Small ribosomal subunit protein uS7, found in Methanothrix thermoacetophila (strain DSM 6194 / JCM 14653 / NBRC 101360 / PT) (Methanosaeta thermophila).